We begin with the raw amino-acid sequence, 414 residues long: MSFRDLRNFTEMMRALGYPRHISMENLRTPNFGLVSEVLLWLVKRYEPQTDIPPDVDTEQDRVFFIKAIAQFMATKAHIKLNTKKLYQADGYAVKELLKITSVLYNAMKTKGMEGSEIVEEDVNKFKFDLGSKIADLKAARQLASEITSKGASLYDLLGMEVELREMRTEAIARPLEINETEKVMRIAIKEILTQVQKTKDLLNNVASDEANLEAKIEKRKLELERNRKRLETLQSVRPCFMDEYEKTEEELQKQYDIYLEKFQNLTYLEQQLEEHHRMEQERFEEAKNTLCLIQNKLKEEEKRLLKSGSNDDSDVDIQEDDESDSELEERRLPKPRTAMEVLMQGRPGKRIVGTMQGGDSDDNEDSEESEIDMEDDDEDEDDDLEDESISLSPTKPNRRVRKPEPLDESDNDF.

A coiled-coil region spans residues 198-291 (KTKDLLNNVA…ERFEEAKNTL (94 aa)). The tract at residues 305–414 (LLKSGSNDDS…EPLDESDNDF (110 aa)) is disordered. 2 stretches are compositionally biased toward acidic residues: residues 312–328 (DDSDVDIQEDDESDSEL) and 360–389 (DSDDNEDSEESEIDMEDDDEDEDDDLEDES). 3 positions are modified to phosphoserine: Ser-314, Ser-324, and Ser-326. Ser-410 is subject to Phosphoserine.

This sequence belongs to the CLUAP1 family. Interacts with CLU/clusterin. Interacts with UBXN10; the interaction is direct.

The protein resides in the cell projection. It localises to the cilium. Its subcellular location is the nucleus. Required for cilia biogenesis. Appears to function within the multiple intraflagellar transport complex B (IFT-B). Key regulator of hedgehog signaling. This chain is Clusterin-associated protein 1 (CLUAP1), found in Macaca fascicularis (Crab-eating macaque).